The primary structure comprises 404 residues: Adenosylhomocysteinase (404 aa).

Substrate-binding residues include aspartate 114 and glutamate 139. 140–142 (TTT) is a binding site for NAD(+). Substrate-binding residues include lysine 169 and aspartate 173. Residues asparagine 174, 203 to 208 (GYGWCG), glutamate 226, asparagine 261, 282 to 284 (AGH), and asparagine 329 contribute to the NAD(+) site.

This sequence belongs to the adenosylhomocysteinase family. The cofactor is NAD(+).

The protein localises to the cytoplasm. The enzyme catalyses S-adenosyl-L-homocysteine + H2O = L-homocysteine + adenosine. Its pathway is amino-acid biosynthesis; L-homocysteine biosynthesis; L-homocysteine from S-adenosyl-L-homocysteine: step 1/1. Functionally, may play a key role in the regulation of the intracellular concentration of adenosylhomocysteine. The sequence is that of Adenosylhomocysteinase from Thermotoga maritima (strain ATCC 43589 / DSM 3109 / JCM 10099 / NBRC 100826 / MSB8).